A 388-amino-acid polypeptide reads, in one-letter code: Pepsin A-5 (388 aa).

A signal peptide spans 1-15 (MKWLLLLGLVALSEC). Residues 16–62 (IMYKVPLIRKKSLRRTLSERGLLKDFLKKHNLNPARKYFPQWEAPTL) constitute a propeptide, activation peptide. A Peptidase A1 domain is found at 76–385 (YFGTIGIGTP…DRANNQVGLA (310 aa)). Aspartate 94 is a catalytic residue. A disulfide bridge connects residues cysteine 107 and cysteine 112. Serine 130 carries the post-translational modification Phosphoserine. Cysteine 268 and cysteine 272 form a disulfide bridge. The active site involves aspartate 277. A disulfide bridge connects residues cysteine 311 and cysteine 344.

It belongs to the peptidase A1 family.

The protein resides in the secreted. The enzyme catalyses Preferential cleavage: hydrophobic, preferably aromatic, residues in P1 and P1' positions. Cleaves 1-Phe-|-Val-2, 4-Gln-|-His-5, 13-Glu-|-Ala-14, 14-Ala-|-Leu-15, 15-Leu-|-Tyr-16, 16-Tyr-|-Leu-17, 23-Gly-|-Phe-24, 24-Phe-|-Phe-25 and 25-Phe-|-Tyr-26 bonds in the B chain of insulin.. Functionally, shows particularly broad specificity; although bonds involving phenylalanine and leucine are preferred, many others are also cleaved to some extent. The protein is Pepsin A-5 (PGA5) of Homo sapiens (Human).